The sequence spans 142 residues: ATP synthase epsilon chain (142 aa).

It belongs to the ATPase epsilon chain family. F-type ATPases have 2 components, CF(1) - the catalytic core - and CF(0) - the membrane proton channel. CF(1) has five subunits: alpha(3), beta(3), gamma(1), delta(1), epsilon(1). CF(0) has three main subunits: a, b and c.

It localises to the cell inner membrane. Functionally, produces ATP from ADP in the presence of a proton gradient across the membrane. The chain is ATP synthase epsilon chain from Histophilus somni (strain 129Pt) (Haemophilus somnus).